The chain runs to 180 residues: Shikimate kinase (180 aa).

An ATP-binding site is contributed by 14–19 (GAGKSS). Ser-18 contributes to the Mg(2+) binding site. Residues Asp-36, Arg-60, and Gly-82 each coordinate substrate. Position 120 (Arg-120) interacts with ATP. Arg-139 contacts substrate.

Belongs to the shikimate kinase family. As to quaternary structure, monomer. It depends on Mg(2+) as a cofactor.

It localises to the cytoplasm. The enzyme catalyses shikimate + ATP = 3-phosphoshikimate + ADP + H(+). It functions in the pathway metabolic intermediate biosynthesis; chorismate biosynthesis; chorismate from D-erythrose 4-phosphate and phosphoenolpyruvate: step 5/7. In terms of biological role, catalyzes the specific phosphorylation of the 3-hydroxyl group of shikimic acid using ATP as a cosubstrate. This chain is Shikimate kinase, found in Xylella fastidiosa (strain 9a5c).